We begin with the raw amino-acid sequence, 1358 residues long: Phosphoinositide 3-kinase regulatory subunit 4 (1358 aa).

G2 is lipidated: N-myristoyl glycine. The region spanning F26–L324 is the Protein kinase domain. Residues L32–V40 and K53 contribute to the ATP site. D148 serves as the catalytic Proton acceptor. HEAT repeat units lie at residues I413–E450, I458–R495, and K572–W610. A phosphoserine mark is found at S808, S813, S853, and S865. The segment at L875–I898 is disordered. WD repeat units follow at residues E991–T1030, R1040–S1079, K1093–T1134, L1139–S1178, P1182–T1223, and P1237–V1278. The segment at K1307–V1326 is disordered. Over residues D1315 to V1326 the composition is skewed to basic and acidic residues. T1316 bears the Phosphothreonine mark. One copy of the WD 7 repeat lies at G1327–K1358.

This sequence belongs to the protein kinase superfamily. Ser/Thr protein kinase family. Component of the PI3K (PI3KC3/PI3K-III/class III phosphatidylinositol 3-kinase) complex the core of which is composed of the catalytic subunit PIK3C3, the regulatory subunit PIK3R4 and BECN1 associating with additional regulatory/auxiliary subunits to form alternative complex forms. Alternative complex forms containing a fourth regulatory subunit in a mutually exclusive manner are PI3K complex I (PI3KC3-C1) containing ATG14, and PI3K complex II (PI3KC3-C2) containing UVRAG. PI3KC3-C1 displays a V-shaped architecture with PIK3R4 serving as a bridge between PIK3C3 and the ATG14:BECN1 subcomplex. Both, PI3KC3-C1 and PI3KC3-C2, can associate with further regulatory subunits, such as RUBCN, SH3GLB1/Bif-1, AMBRA1 and NRBF2. PI3KC3-C1 probably associates with PIK3CB. Interacts with RAB7A in the presence of PIK3C3/VPS34. Interacts with NRBF2. Interacts with ARMC3. Mn(2+) is required as a cofactor. Myristoylated. Post-translationally, probably autophosphorylated. As to expression, ubiquitously expressed.

Its subcellular location is the late endosome. The protein localises to the cytoplasmic vesicle. It is found in the autophagosome. It localises to the membrane. It catalyses the reaction L-seryl-[protein] + ATP = O-phospho-L-seryl-[protein] + ADP + H(+). It carries out the reaction L-threonyl-[protein] + ATP = O-phospho-L-threonyl-[protein] + ADP + H(+). Regulatory subunit of the PI3K complex that mediates formation of phosphatidylinositol 3-phosphate; different complex forms are believed to play a role in multiple membrane trafficking pathways: PI3KC3-C1 is involved in initiation of autophagosomes and PI3KC3-C2 in maturation of autophagosomes and endocytosis. Involved in regulation of degradative endocytic trafficking and cytokinesis, probably in the context of PI3KC3-C2. The protein is Phosphoinositide 3-kinase regulatory subunit 4 (PIK3R4) of Homo sapiens (Human).